The sequence spans 115 residues: Macrophage migration inhibitory factor homolog (115 aa).

Pro-2 serves as the catalytic Proton acceptor; via imino nitrogen. The substrate site is built by Lys-33 and Ile-65.

This sequence belongs to the MIF family.

Its subcellular location is the secreted. The catalysed reaction is L-dopachrome = 5,6-dihydroxyindole-2-carboxylate. It carries out the reaction 3-phenylpyruvate = enol-phenylpyruvate. Functionally, tautomerization of the methyl ester of L-dopachrome. Inhibits migration of human peripheral blood mononuclear cells. The polypeptide is Macrophage migration inhibitory factor homolog (Brugia malayi (Filarial nematode worm)).